Reading from the N-terminus, the 204-residue chain is ATP-dependent Clp protease proteolytic subunit (204 aa).

The active-site Nucleophile is the serine 100. Histidine 125 is an active-site residue.

The protein belongs to the peptidase S14 family. In terms of assembly, fourteen ClpP subunits assemble into 2 heptameric rings which stack back to back to give a disk-like structure with a central cavity, resembling the structure of eukaryotic proteasomes.

The protein resides in the cytoplasm. It catalyses the reaction Hydrolysis of proteins to small peptides in the presence of ATP and magnesium. alpha-casein is the usual test substrate. In the absence of ATP, only oligopeptides shorter than five residues are hydrolyzed (such as succinyl-Leu-Tyr-|-NHMec, and Leu-Tyr-Leu-|-Tyr-Trp, in which cleavage of the -Tyr-|-Leu- and -Tyr-|-Trp bonds also occurs).. Its function is as follows. Cleaves peptides in various proteins in a process that requires ATP hydrolysis. Has a chymotrypsin-like activity. Plays a major role in the degradation of misfolded proteins. The protein is ATP-dependent Clp protease proteolytic subunit of Anaeromyxobacter sp. (strain Fw109-5).